Reading from the N-terminus, the 98-residue chain is Protein translation factor SUI1 homolog (98 aa).

It belongs to the SUI1 family.

In Pyrococcus furiosus (strain ATCC 43587 / DSM 3638 / JCM 8422 / Vc1), this protein is Protein translation factor SUI1 homolog.